The following is a 463-amino-acid chain: Probable cysteine protease RD21B (463 aa).

The N-terminal stretch at 1-21 (MGFLKLSPMILLLAMIGVSYA) is a signal peptide. Positions 22 to 137 (MDMSIISYDE…DRYQARVGDA (116 aa)) are cleaved as a propeptide — activation peptide. N92 is a glycosylation site (N-linked (GlcNAc...) asparagine). 5 disulfides stabilise this stretch: C159–C201, C193–C234, C292–C343, C376–C388, and C382–C403. C162 is an active-site residue. Active-site residues include H298 and N318. Residues 354-463 (KKGQNPPNPG…FWAKSRKHIA (110 aa)) constitute a propeptide, removed in mature form. A glycan (N-linked (GlcNAc...) asparagine) is linked at N415.

It belongs to the peptidase C1 family. As to quaternary structure, interacts with PRN2. Interacts with WSCP.

In terms of biological role, probable thiol protease. In Arabidopsis thaliana (Mouse-ear cress), this protein is Probable cysteine protease RD21B.